We begin with the raw amino-acid sequence, 268 residues long: MTHVFEVYPKVNIFLKILHKEGAYHKLISRMCLVKDKLKDIISVKSALSFSLKGDFDCPLEENSLFKALQILKNFLKSKNFSHSVIKSLDTLAIEVEKNIPTQAGLGGGSTDAGGLLYHLNQIFDWRLSLEELYSMGSLVGADTNFFISQYKSTNATSYGEVIENFEEEPLENRLEIYAPNHVFCSTKAVYQAYKPETCFSQAKEWLKKPSLECLKTYDRNGLNDLLKPALLTNQALKDIESELGKEWFFSGSGSAFFRLKPMQKGGE.

Lys10 is an active-site residue. 101–111 contributes to the ATP binding site; it reads PTQAGLGGGST. Residue Asp143 is part of the active site.

This sequence belongs to the GHMP kinase family. IspE subfamily.

It catalyses the reaction 4-CDP-2-C-methyl-D-erythritol + ATP = 4-CDP-2-C-methyl-D-erythritol 2-phosphate + ADP + H(+). The protein operates within isoprenoid biosynthesis; isopentenyl diphosphate biosynthesis via DXP pathway; isopentenyl diphosphate from 1-deoxy-D-xylulose 5-phosphate: step 3/6. Functionally, catalyzes the phosphorylation of the position 2 hydroxy group of 4-diphosphocytidyl-2C-methyl-D-erythritol. This Helicobacter pylori (strain ATCC 700392 / 26695) (Campylobacter pylori) protein is 4-diphosphocytidyl-2-C-methyl-D-erythritol kinase.